The sequence spans 587 residues: Pyruvate kinase (587 aa).

A substrate-binding site is contributed by Arg-33. Asn-35, Ser-37, Asp-67, and Thr-68 together coordinate K(+). 35-38 (NFSH) is a binding site for ATP. The ATP site is built by Arg-74 and Lys-157. Residue Lys-221 participates in substrate binding. Glu-223 lines the Mg(2+) pocket. The substrate site is built by Gly-246, Asp-247, and Thr-279. Asp-247 is a binding site for Mg(2+).

Belongs to the pyruvate kinase family. The protein in the C-terminal section; belongs to the PEP-utilizing enzyme family. Homotetramer. Requires Mg(2+) as cofactor. The cofactor is K(+). In terms of processing, the N-terminus is blocked.

It catalyses the reaction pyruvate + ATP = phosphoenolpyruvate + ADP + H(+). Its pathway is carbohydrate degradation; glycolysis; pyruvate from D-glyceraldehyde 3-phosphate: step 5/5. Its activity is regulated as follows. Exhibits homotropic positive cooperativity for PEP. Allosterically activated by ribose-5-phosphate, AMP and other nucleoside monophosphates but not by fructose-1,6-bisphosphate. Functionally, catalyzes the phosphoryl transfer from phosphoenolpyruvate (PEP) to ADP to form pyruvate and ATP. Has a broad specificity for nucleoside diphosphates and can use ADP, GDP, IDP and UDP. The protein is Pyruvate kinase (pyk) of Geobacillus stearothermophilus (Bacillus stearothermophilus).